The primary structure comprises 294 residues: Glyceraldehyde-3-phosphate dehydrogenase (294 aa).

NAD(+) contacts are provided by D19, K63, and T105. D-glyceraldehyde 3-phosphate contacts are provided by residues 134–136 (SCT), T165, 194–195 (TG), and R217. Catalysis depends on C135, which acts as the Nucleophile.

Belongs to the glyceraldehyde-3-phosphate dehydrogenase family. In terms of assembly, homotetramer.

It is found in the cytoplasm. The catalysed reaction is D-glyceraldehyde 3-phosphate + phosphate + NAD(+) = (2R)-3-phospho-glyceroyl phosphate + NADH + H(+). It functions in the pathway carbohydrate degradation; glycolysis; pyruvate from D-glyceraldehyde 3-phosphate: step 1/5. Functionally, catalyzes the oxidative phosphorylation of glyceraldehyde 3-phosphate (G3P) to 1,3-bisphosphoglycerate (BPG) using the cofactor NAD. The first reaction step involves the formation of a hemiacetal intermediate between G3P and a cysteine residue, and this hemiacetal intermediate is then oxidized to a thioester, with concomitant reduction of NAD to NADH. The reduced NADH is then exchanged with the second NAD, and the thioester is attacked by a nucleophilic inorganic phosphate to produce BPG. The chain is Glyceraldehyde-3-phosphate dehydrogenase (gap) from Klebsiella aerogenes (Enterobacter aerogenes).